Here is a 264-residue protein sequence, read N- to C-terminus: MSPSHRPVVITGNWKMYKTVKEACTFAKALLPVVEVSPIQVWIAVPFTAIYPVKQEIRNSRLVIGAQNMNDASEGAFTGEIAGKMVKEAGASFVLLGHSERRHLYKEDNAFINRKVKKALEIGLTPVLCVGETFEERKSGETQQIIRTQIQECLAGLTAEDLKTLIIAYEPVWAIGNGQNAKPEGAQEIHQFCRKIIKEIFSEELAEQIVIQYGGSVNPSNAISLLKQPDIDGLLIGGASLSLETFVEIVNDGGSIFNLKAKLL.

Substrate is bound at residue 13–15 (NWK). His98 functions as the Electrophile in the catalytic mechanism. Residue Glu170 is the Proton acceptor of the active site. Substrate is bound by residues Gly176, Ser216, and 237-238 (GG).

The protein belongs to the triosephosphate isomerase family. Homodimer.

The protein localises to the cytoplasm. The enzyme catalyses D-glyceraldehyde 3-phosphate = dihydroxyacetone phosphate. It functions in the pathway carbohydrate biosynthesis; gluconeogenesis. The protein operates within carbohydrate degradation; glycolysis; D-glyceraldehyde 3-phosphate from glycerone phosphate: step 1/1. Its function is as follows. Involved in the gluconeogenesis. Catalyzes stereospecifically the conversion of dihydroxyacetone phosphate (DHAP) to D-glyceraldehyde-3-phosphate (G3P). This is Triosephosphate isomerase from Protochlamydia amoebophila (strain UWE25).